Here is a 488-residue protein sequence, read N- to C-terminus: Bifunctional protein HldE (488 aa).

The interval 1 to 331 (MTELSALVER…VALHREDLTL (331 aa)) is ribokinase. 206 to 209 (NRKE) lines the ATP pocket. Asp276 is a catalytic residue. Positions 358-488 (FTNGCFDLLH…TNTIKKMNGN (131 aa)) are cytidylyltransferase.

In the N-terminal section; belongs to the carbohydrate kinase PfkB family. It in the C-terminal section; belongs to the cytidylyltransferase family. In terms of assembly, homodimer.

The catalysed reaction is D-glycero-beta-D-manno-heptose 7-phosphate + ATP = D-glycero-beta-D-manno-heptose 1,7-bisphosphate + ADP + H(+). The enzyme catalyses D-glycero-beta-D-manno-heptose 1-phosphate + ATP + H(+) = ADP-D-glycero-beta-D-manno-heptose + diphosphate. It functions in the pathway nucleotide-sugar biosynthesis; ADP-L-glycero-beta-D-manno-heptose biosynthesis; ADP-L-glycero-beta-D-manno-heptose from D-glycero-beta-D-manno-heptose 7-phosphate: step 1/4. The protein operates within nucleotide-sugar biosynthesis; ADP-L-glycero-beta-D-manno-heptose biosynthesis; ADP-L-glycero-beta-D-manno-heptose from D-glycero-beta-D-manno-heptose 7-phosphate: step 3/4. Functionally, catalyzes the phosphorylation of D-glycero-D-manno-heptose 7-phosphate at the C-1 position to selectively form D-glycero-beta-D-manno-heptose-1,7-bisphosphate. Its function is as follows. Catalyzes the ADP transfer from ATP to D-glycero-beta-D-manno-heptose 1-phosphate, yielding ADP-D-glycero-beta-D-manno-heptose. This Paramagnetospirillum magneticum (strain ATCC 700264 / AMB-1) (Magnetospirillum magneticum) protein is Bifunctional protein HldE.